The chain runs to 424 residues: Tyrosine--tRNA ligase (424 aa).

Tyr-33 contributes to the L-tyrosine binding site. The 'HIGH' region signature appears at 38 to 47 (PSADSLHIGH). L-tyrosine-binding residues include Tyr-170 and Gln-174. The 'KMSKS' region motif lies at 230–234 (KFGKT). Lys-233 contacts ATP. An S4 RNA-binding domain is found at 357–424 (MSLIDALVRC…RRHYHLIRLV (68 aa)).

Belongs to the class-I aminoacyl-tRNA synthetase family. TyrS type 1 subfamily. As to quaternary structure, homodimer.

Its subcellular location is the cytoplasm. It catalyses the reaction tRNA(Tyr) + L-tyrosine + ATP = L-tyrosyl-tRNA(Tyr) + AMP + diphosphate + H(+). Its function is as follows. Catalyzes the attachment of tyrosine to tRNA(Tyr) in a two-step reaction: tyrosine is first activated by ATP to form Tyr-AMP and then transferred to the acceptor end of tRNA(Tyr). This is Tyrosine--tRNA ligase from Roseiflexus castenholzii (strain DSM 13941 / HLO8).